The sequence spans 205 residues: LexA repressor (205 aa).

Positions 28–48 form a DNA-binding region, H-T-H motif; sequence IRDIMKHFNFKSPRAAHKHLI. Catalysis depends on for autocatalytic cleavage activity residues Ser-125 and Lys-163.

This sequence belongs to the peptidase S24 family. Homodimer.

The catalysed reaction is Hydrolysis of Ala-|-Gly bond in repressor LexA.. Represses a number of genes involved in the response to DNA damage (SOS response), including recA and lexA. In the presence of single-stranded DNA, RecA interacts with LexA causing an autocatalytic cleavage which disrupts the DNA-binding part of LexA, leading to derepression of the SOS regulon and eventually DNA repair. The protein is LexA repressor of Petrotoga mobilis (strain DSM 10674 / SJ95).